A 183-amino-acid polypeptide reads, in one-letter code: Crossover junction endodeoxyribonuclease RuvC (183 aa).

Residues aspartate 7, glutamate 66, and aspartate 138 contribute to the active site. Residues aspartate 7, glutamate 66, and aspartate 138 each contribute to the Mg(2+) site.

This sequence belongs to the RuvC family. In terms of assembly, homodimer which binds Holliday junction (HJ) DNA. The HJ becomes 2-fold symmetrical on binding to RuvC with unstacked arms; it has a different conformation from HJ DNA in complex with RuvA. In the full resolvosome a probable DNA-RuvA(4)-RuvB(12)-RuvC(2) complex forms which resolves the HJ. It depends on Mg(2+) as a cofactor.

The protein localises to the cytoplasm. The enzyme catalyses Endonucleolytic cleavage at a junction such as a reciprocal single-stranded crossover between two homologous DNA duplexes (Holliday junction).. In terms of biological role, the RuvA-RuvB-RuvC complex processes Holliday junction (HJ) DNA during genetic recombination and DNA repair. Endonuclease that resolves HJ intermediates. Cleaves cruciform DNA by making single-stranded nicks across the HJ at symmetrical positions within the homologous arms, yielding a 5'-phosphate and a 3'-hydroxyl group; requires a central core of homology in the junction. The consensus cleavage sequence is 5'-(A/T)TT(C/G)-3'. Cleavage occurs on the 3'-side of the TT dinucleotide at the point of strand exchange. HJ branch migration catalyzed by RuvA-RuvB allows RuvC to scan DNA until it finds its consensus sequence, where it cleaves and resolves the cruciform DNA. This Burkholderia ambifaria (strain ATCC BAA-244 / DSM 16087 / CCUG 44356 / LMG 19182 / AMMD) (Burkholderia cepacia (strain AMMD)) protein is Crossover junction endodeoxyribonuclease RuvC.